Consider the following 397-residue polypeptide: LIM/homeobox protein Lhx9 (397 aa).

LIM zinc-binding domains lie at alanine 69–valine 130 and glutamine 131–glycine 193. 3 disordered regions span residues glutamate 248–threonine 272, glutamate 330–aspartate 364, and serine 378–phenylalanine 397. A DNA-binding region (homeobox) is located at residues threonine 267–leucine 326. The span at leucine 353–aspartate 364 shows a compositional bias: low complexity.

As to quaternary structure, interacts with LDB1 and LDB2.

It localises to the nucleus. In terms of biological role, involved in gonadal development. The chain is LIM/homeobox protein Lhx9 (LHX9) from Homo sapiens (Human).